A 279-amino-acid chain; its full sequence is Lacto-N-neotetraose biosynthesis glycosyltransferase LgtB (279 aa).

The protein belongs to the glycosyltransferase 25 family.

It functions in the pathway glycan metabolism; lacto-N-neotetraose biosynthesis. It participates in bacterial outer membrane biogenesis; lipooligosaccharide biosynthesis. Its function is as follows. Adds the second galactose to the lacto-N-tetraose chain in lipooligosaccharide (LOS). In Neisseria gonorrhoeae, this protein is Lacto-N-neotetraose biosynthesis glycosyltransferase LgtB (lgtB).